The following is a 232-amino-acid chain: MSMPQAILTDIEGTTSSLSFVKDVLFPYARRALPDFVREHREHPDVMPWLDQVANETGTAFSEEALVATLQTWIDTDSKHTALKALQGMIWASGYQNGDFTAHLYPDAVQRLRAWHAANVPLYVYSSGSVPAQQLFFRHSHAGDLSGLFSGWFDTEIGGKRESTSYQRIAEHIGIAPAGIVFLSDVIEELNAAAQIGLNTVLIDRRDDYPTPRHLKDADHHLHLDSFAQLPF.

The protein belongs to the HAD-like hydrolase superfamily. MasA/MtnC family. Monomer. It depends on Mg(2+) as a cofactor.

The enzyme catalyses 5-methylsulfanyl-2,3-dioxopentyl phosphate + H2O = 1,2-dihydroxy-5-(methylsulfanyl)pent-1-en-3-one + phosphate. Its pathway is amino-acid biosynthesis; L-methionine biosynthesis via salvage pathway; L-methionine from S-methyl-5-thio-alpha-D-ribose 1-phosphate: step 3/6. The protein operates within amino-acid biosynthesis; L-methionine biosynthesis via salvage pathway; L-methionine from S-methyl-5-thio-alpha-D-ribose 1-phosphate: step 4/6. Functionally, bifunctional enzyme that catalyzes the enolization of 2,3-diketo-5-methylthiopentyl-1-phosphate (DK-MTP-1-P) into the intermediate 2-hydroxy-3-keto-5-methylthiopentenyl-1-phosphate (HK-MTPenyl-1-P), which is then dephosphorylated to form the acireductone 1,2-dihydroxy-3-keto-5-methylthiopentene (DHK-MTPene). This is Enolase-phosphatase E1 from Xylella fastidiosa (strain 9a5c).